A 546-amino-acid polypeptide reads, in one-letter code: Probable protein kinase UbiB (546 aa).

A Protein kinase domain is found at 124–502 (DFEIKPLASA…HVRQGQSRYF (379 aa)). ATP contacts are provided by residues 130–138 (LASASIAQV) and K153. D288 serves as the catalytic Proton acceptor. 2 helical membrane-spanning segments follow: residues 501 to 521 (YFLG…VSRP) and 522 to 542 (EWGL…FVGW).

It belongs to the ABC1 family. UbiB subfamily.

Its subcellular location is the cell inner membrane. Its pathway is cofactor biosynthesis; ubiquinone biosynthesis [regulation]. Is probably a protein kinase regulator of UbiI activity which is involved in aerobic coenzyme Q (ubiquinone) biosynthesis. The protein is Probable protein kinase UbiB of Shigella boydii serotype 18 (strain CDC 3083-94 / BS512).